The sequence spans 359 residues: Phospho-N-acetylmuramoyl-pentapeptide-transferase (359 aa).

Helical transmembrane passes span 3 to 23, 55 to 75, 84 to 104, 120 to 140, 156 to 176, 187 to 207, 231 to 251, 255 to 275, 280 to 300, and 334 to 354; these read QILI…PVLI, VAIL…GLAL, GLLV…DDLI, TVGI…FGNA, IATV…LVSA, LDGL…LITF, LALV…WNAA, IFMG…LSVT, ILAV…VVQI, and FWLL…GEWL.

The protein belongs to the glycosyltransferase 4 family. MraY subfamily. Mg(2+) serves as cofactor.

It is found in the cell membrane. It catalyses the reaction UDP-N-acetyl-alpha-D-muramoyl-L-alanyl-gamma-D-glutamyl-meso-2,6-diaminopimeloyl-D-alanyl-D-alanine + di-trans,octa-cis-undecaprenyl phosphate = di-trans,octa-cis-undecaprenyl diphospho-N-acetyl-alpha-D-muramoyl-L-alanyl-D-glutamyl-meso-2,6-diaminopimeloyl-D-alanyl-D-alanine + UMP. It functions in the pathway cell wall biogenesis; peptidoglycan biosynthesis. In terms of biological role, catalyzes the initial step of the lipid cycle reactions in the biosynthesis of the cell wall peptidoglycan: transfers peptidoglycan precursor phospho-MurNAc-pentapeptide from UDP-MurNAc-pentapeptide onto the lipid carrier undecaprenyl phosphate, yielding undecaprenyl-pyrophosphoryl-MurNAc-pentapeptide, known as lipid I. The sequence is that of Phospho-N-acetylmuramoyl-pentapeptide-transferase from Mycobacterium sp. (strain MCS).